Reading from the N-terminus, the 496-residue chain is Probable cytosol aminopeptidase (496 aa).

Mn(2+)-binding residues include Lys266 and Asp271. The active site involves Lys278. Residues Asp289, Asp348, and Glu350 each contribute to the Mn(2+) site. Arg352 is an active-site residue.

Belongs to the peptidase M17 family. Mn(2+) is required as a cofactor.

It localises to the cytoplasm. The catalysed reaction is Release of an N-terminal amino acid, Xaa-|-Yaa-, in which Xaa is preferably Leu, but may be other amino acids including Pro although not Arg or Lys, and Yaa may be Pro. Amino acid amides and methyl esters are also readily hydrolyzed, but rates on arylamides are exceedingly low.. The enzyme catalyses Release of an N-terminal amino acid, preferentially leucine, but not glutamic or aspartic acids.. Presumably involved in the processing and regular turnover of intracellular proteins. Catalyzes the removal of unsubstituted N-terminal amino acids from various peptides. The chain is Probable cytosol aminopeptidase from Azotobacter vinelandii (strain DJ / ATCC BAA-1303).